The primary structure comprises 492 residues: MEQKPSKVECGSDPEENSARSPDGKRKRKNGQCPLKSSMSGYIPSYLDKDEQCVVCGDKATGYHYRCITCEGCKGFFRRTIQKNLHPTYSCKYDSCCVIDKITRNQCQLCRFKKCIAVGMAMDLVLDDSKRVAKRKLIEQNRERRRKEEMIRSLQQRPEPTPEEWDLIHVATEAHRSTNAQGSHWKQRRKFLPDDIGQSPIVSMPDGDKVDLEAFSEFTKIITPAITRVVDFAKKLPMFSELPCEDQIILLKGCCMEIMSLRAAVRYDPESDTLTLSGEMAVKREQLKNGGLGVVSDAIFELGKSLSAFNLDDTEVALLQAVLLMSTDRSGLLCVDKIEKSQEAYLLAFEHYVNHRKHNIPHFWPKLLMKEREVQSSILYKGAAAEGRPGGSLGVHPEGQQLLGMHVVQGPQVRQLEQQFGEAGSLRGPVLQHQSPKSPQQRLLELLHRSGILHSRAVCGEDDSSEASSLSSSSSDEDTEVFEDLAGKAASP.

The disordered stretch occupies residues 1–33 (MEQKPSKVECGSDPEENSARSPDGKRKRKNGQC). The segment at 1 to 52 (MEQKPSKVECGSDPEENSARSPDGKRKRKNGQCPLKSSMSGYIPSYLDKDEQ) is modulating. C53, C56, C70, C73, C91, C97, C107, and C110 together coordinate Zn(2+). NR C4-type zinc fingers lie at residues 53-73 (CVVC…CEGC) and 91-115 (CKYD…FKKC). Residues 53-127 (CVVCGDKATG…VGMAMDLVLD (75 aa)) constitute a DNA-binding region (nuclear receptor). One can recognise an NR LBD domain in the interval 163–407 (EEWDLIHVAT…EGQQLLGMHV (245 aa)). Positions 228 and 277 each coordinate 3,3',5-triiodo-L-thyronine. Residues 457-492 (AVCGEDDSSEASSLSSSSSDEDTEVFEDLAGKAASP) are disordered.

Belongs to the nuclear hormone receptor family. NR1 subfamily. As to quaternary structure, binds DNA as a dimer; homodimer and heterodimer with RXRB. Interacts with NCOA3 and NCOA6 coactivators, leading to a strong increase of transcription of target genes. Probably interacts with SFPQ. Interacts with C1D. Interacts with AKAP13. Interacts with TP53INP2. Interacts with PER2. Isoform alpha-2 and isoform alpha-1 interact with TACC1, but the interaction with alpha-1 is weaker. The interaction with isoform alpha-1, but not alpha-2, is decreased in the presence of thyroid hormone T3.

Its subcellular location is the nucleus. The protein localises to the cytoplasm. Its function is as follows. Nuclear hormone receptor that can act as a repressor or activator of transcription. High affinity receptor for thyroid hormones, including triiodothyronine and thyroxine. In Rattus norvegicus (Rat), this protein is Thyroid hormone receptor alpha (Thra).